Consider the following 717-residue polypeptide: Polyribonucleotide nucleotidyltransferase (717 aa).

D495 and D501 together coordinate Mg(2+). The KH domain occupies 562 to 624 (PRMIMIQIPK…TALDSALSQI (63 aa)). Residues 634–703 (GEVYEGKVKS…KTGKYRLSRK (70 aa)) enclose the S1 motif domain.

It belongs to the polyribonucleotide nucleotidyltransferase family. It depends on Mg(2+) as a cofactor.

Its subcellular location is the cytoplasm. The enzyme catalyses RNA(n+1) + phosphate = RNA(n) + a ribonucleoside 5'-diphosphate. Functionally, involved in mRNA degradation. Catalyzes the phosphorolysis of single-stranded polyribonucleotides processively in the 3'- to 5'-direction. The chain is Polyribonucleotide nucleotidyltransferase from Cytophaga hutchinsonii (strain ATCC 33406 / DSM 1761 / CIP 103989 / NBRC 15051 / NCIMB 9469 / D465).